The sequence spans 351 residues: Peptide chain release factor 1 (351 aa).

Glutamine 233 carries the post-translational modification N5-methylglutamine.

The protein belongs to the prokaryotic/mitochondrial release factor family. Methylated by PrmC. Methylation increases the termination efficiency of RF1.

It localises to the cytoplasm. In terms of biological role, peptide chain release factor 1 directs the termination of translation in response to the peptide chain termination codons UAG and UAA. The protein is Peptide chain release factor 1 (prfA) of Treponema pallidum (strain Nichols).